Reading from the N-terminus, the 97-residue chain is Carboxypeptidase inhibitor (97 aa).

Residues 1-22 form the signal peptide; sequence MAATLPVFAVVFFAMVLASSQA.

It is found in the secreted. Functionally, potent competitive inhibitor of metallo-carboxypeptidases CPA1, CPA2, CPB, CPN, and TAF1a. Also inhibits human CPA4. Accelerates fibrinolysis in vitro and may contribute to the maintenance of host blood liquidity during feeding. This is Carboxypeptidase inhibitor from Rhipicephalus bursa (Tick).